The primary structure comprises 83 residues: Exodeoxyribonuclease 7 small subunit (83 aa).

This sequence belongs to the XseB family. As to quaternary structure, heterooligomer composed of large and small subunits.

It localises to the cytoplasm. It carries out the reaction Exonucleolytic cleavage in either 5'- to 3'- or 3'- to 5'-direction to yield nucleoside 5'-phosphates.. Its function is as follows. Bidirectionally degrades single-stranded DNA into large acid-insoluble oligonucleotides, which are then degraded further into small acid-soluble oligonucleotides. This is Exodeoxyribonuclease 7 small subunit from Novosphingobium aromaticivorans (strain ATCC 700278 / DSM 12444 / CCUG 56034 / CIP 105152 / NBRC 16084 / F199).